The chain runs to 283 residues: Pantothenate synthetase (283 aa).

Position 30–37 (30–37) interacts with ATP; sequence MGYYHAGH. H37 (proton donor) is an active-site residue. Q61 contributes to the (R)-pantoate binding site. Q61 provides a ligand contact to beta-alanine. 147-150 is a binding site for ATP; it reads GQKD. (R)-pantoate is bound at residue Q153. Residues V176 and 184–187 each bind ATP; that span reads MSSR.

It belongs to the pantothenate synthetase family. As to quaternary structure, homodimer.

The protein resides in the cytoplasm. The catalysed reaction is (R)-pantoate + beta-alanine + ATP = (R)-pantothenate + AMP + diphosphate + H(+). The protein operates within cofactor biosynthesis; (R)-pantothenate biosynthesis; (R)-pantothenate from (R)-pantoate and beta-alanine: step 1/1. Catalyzes the condensation of pantoate with beta-alanine in an ATP-dependent reaction via a pantoyl-adenylate intermediate. The protein is Pantothenate synthetase of Nitratidesulfovibrio vulgaris (strain ATCC 29579 / DSM 644 / CCUG 34227 / NCIMB 8303 / VKM B-1760 / Hildenborough) (Desulfovibrio vulgaris).